The chain runs to 441 residues: Putative F-box protein At1g33530 (441 aa).

Residues 91 to 137 (TTLAVELPDVLVEEILQRLPVKYLVRLKSISKGWKSLIESDHLAEKH) enclose the F-box domain.

The sequence is that of Putative F-box protein At1g33530 from Arabidopsis thaliana (Mouse-ear cress).